Reading from the N-terminus, the 587-residue chain is Trihelix transcription factor GTL1 (587 aa).

Composition is skewed to gly residues over residues 1-10 and 41-54; these read MEQGGGGGGN and GGLG…GGGS. The disordered stretch occupies residues 1–63; that stretch reads MEQGGGGGGN…SASSSSGNRW (63 aa). A Myb-like 1 domain is found at 55–119; it reads ASSSSGNRWP…KCKEKFENVQ (65 aa). The short motif at 96–103 is the Nuclear localization signal 1 element; sequence SRKLLELG. Residues 173 to 194 are compositionally biased toward low complexity; that stretch reads SSSPFPVFSQPQPQTQTQPPQT. The disordered stretch occupies residues 173–264; it reads SSSPFPVFSQ…RKRGNRGGGG (92 aa). Positions 201-210 are enriched in pro residues; it reads PTPPPLPLPS. Residues 221 to 232 show a composition bias toward low complexity; sequence SSHSSSTASGMG. Positions 233–242 are enriched in acidic residues; the sequence is SDDDDDDMDV. Positions 285–328 form a coiled coil; the sequence is QRSFLEALEKREQERLDREEAWKRQEMARLAREHEVMSQERAAS. Positions 348–435 are disordered; sequence QLPPSLSSQP…EQSSLPSSSR (88 aa). The span at 356–366 shows a compositional bias: pro residues; that stretch reads QPPPPYQPPPA. Low complexity-rich tracts occupy residues 379-395 and 411-434; these read AQSQ…QQQI and QKQQ…PSSS. The region spanning 434 to 492 is the Myb-like 2 domain; sequence SRWPKAEILALINLRSGMEPRYQDNVPKGLLWEEISTSMKRMGYNRNAKRCKEKWENIN. A Nuclear localization signal 2 motif is present at residues 472–479; the sequence is MKRMGYNR. The disordered stretch occupies residues 530–587; it reads GGGSSTSGLPQDQKQSPVTAMKPPQEGLVNVQQTHGSASTEEEEPIEESPQGTEKKTL. Composition is skewed to polar residues over residues 538–547 and 559–568; these read LPQDQKQSPV and NVQQTHGSAS.

Mostly expressed in siliques, and, to a lower extent, in growing root hairs, leaves, stems, and flowers. Present in abaxial epidermal cells, predominantly in guard cells, pavement cells, and meristemoids.

The protein localises to the nucleus. Functionally, transcription repressor that binds specific DNA sequence such as GT3 box 5'-GGTAAA-3' in the SDD1 promoter. Negative regulator of water use efficiency (WUE) via the promotion of stomatal density and distribution by the transcription repression of SDD1. Regulates the expression of several cell cycle genes and endoreduplication, especially in trichomes where it prevents ploidy-dependent plant cell growth. Regulates negatively root hair growth by directly binding RSL4 promoter and repressing RSL4 expression. The protein is Trihelix transcription factor GTL1 of Arabidopsis thaliana (Mouse-ear cress).